A 268-amino-acid chain; its full sequence is Octanoyltransferase (268 aa).

Residues 73–261 (GEADELVWLL…AFEEVFGPAV (189 aa)) form the BPL/LPL catalytic domain. Residues 112–119 (RGGEYTYH), 192–194 (ALG), and 205–207 (GLS) contribute to the substrate site. The active-site Acyl-thioester intermediate is Cys-223.

The protein belongs to the LipB family.

The protein localises to the cytoplasm. It carries out the reaction octanoyl-[ACP] + L-lysyl-[protein] = N(6)-octanoyl-L-lysyl-[protein] + holo-[ACP] + H(+). The protein operates within protein modification; protein lipoylation via endogenous pathway; protein N(6)-(lipoyl)lysine from octanoyl-[acyl-carrier-protein]: step 1/2. In terms of biological role, catalyzes the transfer of endogenously produced octanoic acid from octanoyl-acyl-carrier-protein onto the lipoyl domains of lipoate-dependent enzymes. Lipoyl-ACP can also act as a substrate although octanoyl-ACP is likely to be the physiological substrate. The sequence is that of Octanoyltransferase from Agrobacterium fabrum (strain C58 / ATCC 33970) (Agrobacterium tumefaciens (strain C58)).